Reading from the N-terminus, the 512-residue chain is MTELRDETPLFHKGEIVLCYEPDKSKARVLYTSKVLNVFERRNEHGLRFYEYKIHFQGWRPSYDRCVRATVLLKDTEENRQLQRELAEAAKLQIRGDYSYKGTPDKPSAKKKRGGKAAHVEEPIVVPMDTGHLEAEHEMAPTPRAAGNRTRDNSGGKRKEKPPSGDGRLKGNRGRQTETFYNNAINDVSVYNHVPQEDRIMMRVSERLRELIEYDRNMIKVLGKQHALPARVPIVTIMENFVKQQAVELAISIKQDSSRARNTQSRNARMEREYDRVMSTVCMLKEVVDGLRIYFEFHVDDHLLYTEEKEYVHNYLTDDNMRNCSLILNKSYEYINPSGDTELIGLDGTPVVEGSGDTNGQIGVINIGGPEYEKQLQKCLLYIVTASGKNTAQAYERTSPYTAAYKLPVEMRGFLNETFKWRLLSAESPPEKSMVFGAPHLVRLMIKMPMFLNASPISNKKLEDLLPHLDAFINYLENHREWFDRENFVNSTALPQEDLQRELLDSLDGIAA.

Positions 11 to 90 (FHKGEIVLCY…QLQRELAEAA (80 aa)) constitute a Chromo domain. The segment at 98-175 (YSYKGTPDKP…DGRLKGNRGR (78 aa)) is disordered. Residues 149-169 (RTRDNSGGKRKEKPPSGDGRL) are compositionally biased toward basic and acidic residues. The MRG domain maps to 196-500 (QEDRIMMRVS…STALPQEDLQ (305 aa)).

As to quaternary structure, component of the male-specific lethal (MSL) histone acetyltransferase complex, composed of mof, mle, msl-1, msl-2 and msl-3 proteins, as well as roX1 and roX2 non-coding RNAs. Component of a maternal MSL subcomplex composed of mof, msl-1 and msl-3. Ubiquitinated by msl-2.

It is found in the nucleus. It localises to the chromosome. Functionally, component of the male-specific lethal (MSL) histone acetyltransferase complex, a multiprotein complex essential for elevating transcription of the single X chromosome in the male (X chromosome dosage compensation). The MSL complex specifically associates with the single X chromosome in males and mediates formation of H4K16ac, promoting a two-fold activation of X chromosome. Acts as a histone reader that specifically recognizes and binds histone H3 trimethylated at 'Lys-36' (H3K36me3) and histone H4 monomethylated at 'Lys-20' (H4K20me1). Within the MSL complex, mediates the spreading of the MSL complex from initiation sites on the male X chromosome to flanking chromatin. Following initial recruitment of the MSL complex to male X chromosome by msl-2, msl-3 binds H3K36me3 and promotes spreading of the MSL complex in cis. In addition to its role in dosage compensation in males, promotes germline stem cell differentiation in females: recognizes and binds H3K36me3, promoting recruitment of the ATAC complex and transcription of genes, such as RpS19b. This chain is Protein male-specific lethal-3, found in Drosophila melanogaster (Fruit fly).